The chain runs to 967 residues: Probable helicase DDB_G0274399 (967 aa).

The interval 161–192 (EMTDDEDTAPTSAATHVGAPTKSTTTTTTTTT) is disordered. Position 357–364 (357–364 (GPPGTGKT)) interacts with ATP. Disordered stretches follow at residues 529 to 553 (SAIP…QDTS) and 892 to 967 (QKQK…RTRR). Residues 890-949 (NLQKQKDIEKRKKQHKRQKQKSKENDKKKQLKKRKELNNNDNNNNNKESSNKEVQEITNA) adopt a coiled-coil conformation. Over residues 900–909 (RKKQHKRQKQ) the composition is skewed to basic residues. Low complexity predominate over residues 928-937 (NNDNNNNNKE).

Belongs to the DNA2/NAM7 helicase family.

The protein resides in the nucleus. This Dictyostelium discoideum (Social amoeba) protein is Probable helicase DDB_G0274399.